We begin with the raw amino-acid sequence, 522 residues long: GMP synthase [glutamine-hydrolyzing] (522 aa).

In terms of domain architecture, Glutamine amidotransferase type-1 spans Tyr-5–Val-204. Residue Cys-82 is the Nucleophile of the active site. Catalysis depends on residues His-178 and Glu-180. The GMPS ATP-PPase domain occupies Ile-205–Arg-397. Ser-232 to Phe-238 lines the ATP pocket.

In terms of assembly, homodimer.

The enzyme catalyses XMP + L-glutamine + ATP + H2O = GMP + L-glutamate + AMP + diphosphate + 2 H(+). The protein operates within purine metabolism; GMP biosynthesis; GMP from XMP (L-Gln route): step 1/1. Catalyzes the synthesis of GMP from XMP. In Wigglesworthia glossinidia brevipalpis, this protein is GMP synthase [glutamine-hydrolyzing].